A 619-amino-acid chain; its full sequence is Dihydroxy-acid dehydratase (619 aa).

Asp-81 lines the Mg(2+) pocket. Position 122 (Cys-122) interacts with [2Fe-2S] cluster. The Mg(2+) site is built by Asp-123 and Lys-124. The residue at position 124 (Lys-124) is an N6-carboxylysine. Cys-198 is a binding site for [2Fe-2S] cluster. Glu-494 provides a ligand contact to Mg(2+). The active-site Proton acceptor is the Ser-520.

It belongs to the IlvD/Edd family. Homodimer. Requires [2Fe-2S] cluster as cofactor. Mg(2+) is required as a cofactor.

It catalyses the reaction (2R)-2,3-dihydroxy-3-methylbutanoate = 3-methyl-2-oxobutanoate + H2O. The enzyme catalyses (2R,3R)-2,3-dihydroxy-3-methylpentanoate = (S)-3-methyl-2-oxopentanoate + H2O. The protein operates within amino-acid biosynthesis; L-isoleucine biosynthesis; L-isoleucine from 2-oxobutanoate: step 3/4. It participates in amino-acid biosynthesis; L-valine biosynthesis; L-valine from pyruvate: step 3/4. In terms of biological role, functions in the biosynthesis of branched-chain amino acids. Catalyzes the dehydration of (2R,3R)-2,3-dihydroxy-3-methylpentanoate (2,3-dihydroxy-3-methylvalerate) into 2-oxo-3-methylpentanoate (2-oxo-3-methylvalerate) and of (2R)-2,3-dihydroxy-3-methylbutanoate (2,3-dihydroxyisovalerate) into 2-oxo-3-methylbutanoate (2-oxoisovalerate), the penultimate precursor to L-isoleucine and L-valine, respectively. This chain is Dihydroxy-acid dehydratase, found in Neisseria gonorrhoeae (strain ATCC 700825 / FA 1090).